Reading from the N-terminus, the 274-residue chain is Diaminopimelate epimerase (274 aa).

The substrate site is built by N11, Q44, and N64. The Proton donor role is filled by C73. Substrate is bound by residues 74–75 (GN), N157, N190, and 208–209 (ER). The Proton acceptor role is filled by C217. 218-219 (GS) lines the substrate pocket.

The protein belongs to the diaminopimelate epimerase family. In terms of assembly, homodimer.

The protein localises to the cytoplasm. The catalysed reaction is (2S,6S)-2,6-diaminopimelate = meso-2,6-diaminopimelate. It participates in amino-acid biosynthesis; L-lysine biosynthesis via DAP pathway; DL-2,6-diaminopimelate from LL-2,6-diaminopimelate: step 1/1. In terms of biological role, catalyzes the stereoinversion of LL-2,6-diaminopimelate (L,L-DAP) to meso-diaminopimelate (meso-DAP), a precursor of L-lysine and an essential component of the bacterial peptidoglycan. This chain is Diaminopimelate epimerase, found in Cronobacter sakazakii (strain ATCC BAA-894) (Enterobacter sakazakii).